Here is a 1240-residue protein sequence, read N- to C-terminus: ATP-dependent helicase/nuclease subunit A (1240 aa).

The region spanning 12–485 (SQWTDDQWKA…IDLAKNFRSR (474 aa)) is the UvrD-like helicase ATP-binding domain. 33–40 (AAAGSGKT) serves as a coordination point for ATP. Positions 497 to 804 (KQIMGEEVGE…RIMTIHKSKG (308 aa)) constitute a UvrD-like helicase C-terminal domain.

It belongs to the helicase family. AddA subfamily. As to quaternary structure, heterodimer of AddA and AddB/RexB. Mg(2+) is required as a cofactor.

The catalysed reaction is Couples ATP hydrolysis with the unwinding of duplex DNA by translocating in the 3'-5' direction.. It catalyses the reaction ATP + H2O = ADP + phosphate + H(+). Functionally, the heterodimer acts as both an ATP-dependent DNA helicase and an ATP-dependent, dual-direction single-stranded exonuclease. Recognizes the chi site generating a DNA molecule suitable for the initiation of homologous recombination. The AddA nuclease domain is required for chi fragment generation; this subunit has the helicase and 3' -&gt; 5' nuclease activities. The sequence is that of ATP-dependent helicase/nuclease subunit A from Bacillus cereus (strain AH820).